Reading from the N-terminus, the 128-residue chain is NHP2-like protein 1 (128 aa).

The interaction with U4 snRNA and U4atac snRNA stretch occupies residues 36–48 (RKGANEATKTLNR). Positions 96-128 (SRPVIACSVTIKEGSQLKPQIQSVQQAIERLLV) are important for U4 snRNA-binding.

It belongs to the eukaryotic ribosomal protein eL8 family. As to quaternary structure, identified in the spliceosome B complex. Component of the U4/U6-U5 tri-snRNP complex. Part of the small subunit (SSU) processome, composed of more than 70 proteins and the RNA chaperone small nucleolar RNA (snoRNA) U3.

It localises to the nucleus. It is found in the nucleolus. In terms of biological role, part of the small subunit (SSU) processome, first precursor of the small eukaryotic ribosomal subunit. During the assembly of the SSU processome in the nucleolus, many ribosome biogenesis factors, an RNA chaperone and ribosomal proteins associate with the nascent pre-rRNA and work in concert to generate RNA folding, modifications, rearrangements and cleavage as well as targeted degradation of pre-ribosomal RNA by the RNA exosome. Involved in pre-mRNA splicing as component of the spliceosome. Binds to the 5'-stem-loop of U4 snRNA and thereby contributes to spliceosome assembly. The protein undergoes a conformational change upon RNA-binding. Core component of box C/D small nucleolar ribonucleoprotein (snoRNP) complexes that function in methylation of multiple sites on ribosomal RNAs (rRNAs) and messenger RNAs (mRNAs). The protein is NHP2-like protein 1 of Xenopus laevis (African clawed frog).